We begin with the raw amino-acid sequence, 113 residues long: TYRO protein tyrosine kinase-binding protein (113 aa).

The first 27 residues, methionine 1 to alanine 27, serve as a signal peptide directing secretion. The Extracellular segment spans residues glutamine 28–proline 40. Residues glycine 41–valine 61 traverse the membrane as a helical segment. Aspartate 50 is a Ca(2+) binding site. At tyrosine 62–lysine 113 the chain is on the cytoplasmic side. The interval alanine 75–lysine 113 is disordered. The ITAM domain maps to arginine 80 to glutamine 108. Positions threonine 87–aspartate 100 are enriched in polar residues. Phosphotyrosine is present on residues tyrosine 91 and tyrosine 102.

It belongs to the TYROBP family. As to quaternary structure, homodimer; disulfide-linked. Homotrimer; disulfide-linked. Homotetramer; disulfide-linked. Homotrimers and homotetramers form when low levels of partner receptors are available and is competitive with assembly with interacting receptors. They may represent alternative oligomerization states or may be intermediates in the receptor assembly process. Binding of a metal cation aids in homooligomerization through coordination of the metal ion by the subunits of the oligomer. Interacts with TREM1. Interacts with TREM2. Interacts with CLECSF5. Interacts with CD300LB and CD300C2. Interacts with CD300E. Interacts (via ITAM domain) with SYK (via SH2 domains); activates SYK mediating neutrophils and macrophages integrin-mediated activation. Interacts with KLRC2. Interacts with CD300H. Interacts with KLRD1. Interacts with SIGLEC1. Following ligand binding by associated receptors, tyrosine phosphorylated in the ITAM domain which leads to activation of additional tyrosine kinases and subsequent cell activation.

It is found in the cell membrane. Functionally, adapter protein which non-covalently associates with activating receptors found on the surface of a variety of immune cells to mediate signaling and cell activation following ligand binding by the receptors. TYROBP is tyrosine-phosphorylated in the ITAM domain following ligand binding by the associated receptors which leads to activation of additional tyrosine kinases and subsequent cell activation. Also has an inhibitory role in some cells. Non-covalently associates with activating receptors of the CD300 family to mediate cell activation. Also mediates cell activation through association with activating receptors of the CD200R family. Required for neutrophil activation mediated by integrin. Required for the activation of myeloid cells mediated by the CLEC5A/MDL1 receptor. Associates with natural killer (NK) cell receptors such as the KLRD1/KLRC2 heterodimer to mediate NK cell activation. Associates with TREM1 to mediate activation of neutrophils and monocytes. Associates with TREM2 on monocyte-derived dendritic cells to mediate up-regulation of chemokine receptor CCR7 and dendritic cell maturation and survival. Association with TREM2 mediates cytokine-induced formation of multinucleated giant cells which are formed by the fusion of macrophages. Stabilizes the TREM2 C-terminal fragment (TREM2-CTF) produced by TREM2 ectodomain shedding which suppresses the release of pro-inflammatory cytokines. In microglia, required with TREM2 for phagocytosis of apoptotic neurons. Required with ITGAM/CD11B in microglia to control production of microglial superoxide ions which promote the neuronal apoptosis that occurs during brain development. Promotes pro-inflammatory responses in microglia following nerve injury which accelerates degeneration of injured neurons. Positively regulates the expression of the IRAK3/IRAK-M kinase and IL10 production by liver dendritic cells and inhibits their T cell allosimulatory ability. Negatively regulates B cell proliferation. Required for CSF1-mediated osteoclast cytoskeletal organization. Positively regulates multinucleation during osteoclast development. The polypeptide is TYRO protein tyrosine kinase-binding protein (Pan troglodytes (Chimpanzee)).